Consider the following 229-residue polypeptide: uncharacterized protein (229 aa).

The next 7 membrane-spanning stretches (helical) occupy residues Met1 to Phe21, Ile32 to His52, Tyr58 to Leu78, Thr100 to Leu120, Ile139 to Trp159, Leu178 to Leu198, and Leu206 to Gly226.

Its subcellular location is the cell membrane. This is an uncharacterized protein from Bacillus subtilis (strain 168).